The following is a 341-amino-acid chain: Serine proteinase inhibitor 2 (341 aa).

It belongs to the serpin family. Poxviruses subfamily.

The protein localises to the host cytoplasm. Its function is as follows. Viral serpin that inhibits both cysteine and serine proteinases involved in the regulation of host inflammatory and apoptosis processes. Major anti-apoptotic protein which inhibits both intrinsic and extrinsic pathways and strongly cleaves host CASP1 and CASP8 but is a rather poor inhibitor of host CASP3. Prevents the proteolytic activity of host interleukin-1-beta converting enzyme (ICE) and ICE-like enzymes. Can also block apoptosis through host tumor necrosis factor (TNF) receptor. This is Serine proteinase inhibitor 2 (OPG199) from Bos taurus (Bovine).